The following is a 72-amino-acid chain: Hydrophobic protein OSR8 (72 aa).

Helical transmembrane passes span 9–29 (FLEILLAIILPPLGVFLRFGC) and 39–59 (LLTILGYVPGIIYAVYVLVAL).

It belongs to the UPF0057 (PMP3) family.

Its subcellular location is the membrane. This is Hydrophobic protein OSR8 (OSR8) from Oryza sativa subsp. japonica (Rice).